Reading from the N-terminus, the 158-residue chain is Cyclic pyranopterin monophosphate synthase (158 aa).

Residues 74–76 (MCH) and 112–113 (ME) each bind substrate. The active site involves D127.

This sequence belongs to the MoaC family. Homohexamer; trimer of dimers.

The enzyme catalyses (8S)-3',8-cyclo-7,8-dihydroguanosine 5'-triphosphate = cyclic pyranopterin phosphate + diphosphate. It participates in cofactor biosynthesis; molybdopterin biosynthesis. Functionally, catalyzes the conversion of (8S)-3',8-cyclo-7,8-dihydroguanosine 5'-triphosphate to cyclic pyranopterin monophosphate (cPMP). The polypeptide is Cyclic pyranopterin monophosphate synthase (Helicobacter pylori (strain ATCC 700392 / 26695) (Campylobacter pylori)).